Reading from the N-terminus, the 62-residue chain is Sperm protamine P1 (62 aa).

A disordered region spans residues 1-62; that stretch reads MARYRHSRSR…RYSRRRRRRY (62 aa).

This sequence belongs to the protamine P1 family. Testis.

It is found in the nucleus. It localises to the chromosome. Functionally, protamines substitute for histones in the chromatin of sperm during the haploid phase of spermatogenesis. They compact sperm DNA into a highly condensed, stable and inactive complex. This is Sperm protamine P1 (PRM1) from Wallabia bicolor (Swamp wallaby).